A 95-amino-acid polypeptide reads, in one-letter code: Integration host factor subunit beta (95 aa).

A disordered region spans residues 57-76 (APRTGRNPKTGDKVDLEGKY). The segment covering 65 to 76 (KTGDKVDLEGKY) has biased composition (basic and acidic residues).

The protein belongs to the bacterial histone-like protein family. In terms of assembly, heterodimer of an alpha and a beta chain.

Its function is as follows. This protein is one of the two subunits of integration host factor, a specific DNA-binding protein that functions in genetic recombination as well as in transcriptional and translational control. This chain is Integration host factor subunit beta, found in Enterobacter sp. (strain 638).